We begin with the raw amino-acid sequence, 442 residues long: Protoheme IX farnesyltransferase (442 aa).

The segment at 1 to 167 (MGVYSLLVLG…AYVQLMKPRL (167 aa)) is unknown. 11 helical membrane passes run 49–69 (AAAL…RTGA), 76–96 (AVTL…YTAM), 106–126 (VHLT…AWTL), 167–187 (LMWL…SQLG), 194–214 (AATV…SGTF), 245–265 (LAFG…VNLL), 267–287 (AVLG…VLKP), 308–328 (WVAV…VIFL), 365–385 (HIVY…ELTG), 386–406 (LGPL…YFAI), and 421–441 (FHAS…DTMV). The interval 168–439 (MWLLCLVAGA…CLLVAVVLDT (272 aa)) is prenyltransferase.

It in the C-terminal section; belongs to the UbiA prenyltransferase family. Protoheme IX farnesyltransferase subfamily.

It is found in the cell membrane. The enzyme catalyses heme b + (2E,6E)-farnesyl diphosphate + H2O = Fe(II)-heme o + diphosphate. It functions in the pathway porphyrin-containing compound metabolism; heme O biosynthesis; heme O from protoheme: step 1/1. Its function is as follows. Converts heme B (protoheme IX) to heme O by substitution of the vinyl group on carbon 2 of heme B porphyrin ring with a hydroxyethyl farnesyl side group. The polypeptide is Protoheme IX farnesyltransferase (ctaB) (Halobacterium salinarum (strain ATCC 700922 / JCM 11081 / NRC-1) (Halobacterium halobium)).